The chain runs to 179 residues: Large ribosomal subunit protein eL18 (179 aa).

This sequence belongs to the eukaryotic ribosomal protein eL18 family. In terms of assembly, component of the large ribosomal subunit.

It localises to the cytoplasm. The protein localises to the cytosol. Its subcellular location is the rough endoplasmic reticulum. Component of the large ribosomal subunit. The ribosome is a large ribonucleoprotein complex responsible for the synthesis of proteins in the cell. The chain is Large ribosomal subunit protein eL18 (rpl18) from Salmo salar (Atlantic salmon).